Here is a 314-residue protein sequence, read N- to C-terminus: tRNA dimethylallyltransferase (314 aa).

13 to 20 lines the ATP pocket; sequence GPTAVGKT. Residue 15 to 20 participates in substrate binding; sequence TAVGKT. The segment at 38–41 is interaction with substrate tRNA; that stretch reads DSMQ.

Belongs to the IPP transferase family. As to quaternary structure, monomer. It depends on Mg(2+) as a cofactor.

It catalyses the reaction adenosine(37) in tRNA + dimethylallyl diphosphate = N(6)-dimethylallyladenosine(37) in tRNA + diphosphate. In terms of biological role, catalyzes the transfer of a dimethylallyl group onto the adenine at position 37 in tRNAs that read codons beginning with uridine, leading to the formation of N6-(dimethylallyl)adenosine (i(6)A). This Bacillus licheniformis (strain ATCC 14580 / DSM 13 / JCM 2505 / CCUG 7422 / NBRC 12200 / NCIMB 9375 / NCTC 10341 / NRRL NRS-1264 / Gibson 46) protein is tRNA dimethylallyltransferase.